The chain runs to 285 residues: HTH-type transcriptional regulator MurR (285 aa).

The region spanning 1 to 77 (MLYLTKISNA…MALIGEYSAS (77 aa)) is the HTH rpiR-type domain. The H-T-H motif DNA-binding region spans 37–56 (SRQMAKQLGISQSSIVKFAQ). In terms of domain architecture, SIS spans 128 to 268 (IIEVISKAPF…FVGLVQLNDV (141 aa)).

Homotetramer.

Its pathway is amino-sugar metabolism; N-acetylmuramate degradation [regulation]. Represses the expression of the murPQ operon involved in the uptake and degradation of N-acetylmuramic acid (MurNAc). Binds to two adjacent inverted repeats within the operator region. MurNAc 6-phosphate, the substrate of MurQ, is the specific inducer that weakens binding of MurR to the operator. This chain is HTH-type transcriptional regulator MurR, found in Escherichia coli O139:H28 (strain E24377A / ETEC).